A 1022-amino-acid chain; its full sequence is Dihydropyrimidine dehydrogenase [NADP(+)] (1022 aa).

A disordered region spans residues 26 to 45 (ANVHSTASKKNEKKHWKRNP). The 4Fe-4S ferredoxin-type 1 domain maps to 69–100 (ERGALREALRCLKCADAPCQKSCPTNLDIKSF). Residues Cys79, Cys82, Cys87, and Cys91 each contribute to the [4Fe-4S] cluster site. Val129 is a binding site for FAD. [4Fe-4S] cluster-binding residues include Cys130, Cys136, Cys140, and Gln156. Residues 194-198 (GCGPA), 218-226 (EKQKYIGGL), Arg235, and Leu261 each bind FAD. Residues 340–343 (AGDT), 364–365 (RK), Arg371, 437–439 (AFG), and 481–487 (DIAGFAN) contribute to the NADP(+) site. 480-489 (GDIAGFANTT) serves as a coordination point for FAD. Residues Ser550 and 574–575 (KT) each bind FMN. Substrate contacts are provided by residues Asn609 and 668–670 (NLS). Cys671 serves as the catalytic Proton acceptor. Lys709 serves as a coordination point for FMN. 736–737 (NT) lines the substrate pocket. FMN-binding positions include Gly767, 793–795 (TGG), and 816–817 (CS). 4Fe-4S ferredoxin-type domains are found at residues 943 to 975 (VQAL…FDPE) and 976 to 1006 (THLP…MVSR). [4Fe-4S] cluster-binding residues include Cys952, Cys955, Cys958, Cys962, Cys985, Cys988, Cys991, and Cys995.

Belongs to the dihydropyrimidine dehydrogenase family. In terms of assembly, homodimer. FAD serves as cofactor. FMN is required as a cofactor. Requires [4Fe-4S] cluster as cofactor.

It localises to the cytoplasm. The enzyme catalyses 5,6-dihydrouracil + NADP(+) = uracil + NADPH + H(+). It carries out the reaction 5,6-dihydrothymine + NADP(+) = thymine + NADPH + H(+). Its pathway is amino-acid biosynthesis; beta-alanine biosynthesis. Functionally, involved in pyrimidine base degradation. Catalyzes the reduction of uracil and thymine. Also involved the degradation of the chemotherapeutic drug 5-fluorouracil. The protein is Dihydropyrimidine dehydrogenase [NADP(+)] (dpyd) of Danio rerio (Zebrafish).